The primary structure comprises 904 residues: Myelin regulatory factor-like protein (904 aa).

The segment at 46 to 132 (LQRQLPDTPP…ATCRHQTGPS (87 aa)) is disordered. Over residues 100-117 (PSQSMAGQTHSSFQNGYP) the composition is skewed to polar residues. Positions 108 to 400 (THSSFQNGYP…SNPGQFENDS (293 aa)) form a DNA-binding region, NDT80. One can recognise a Peptidase S74 domain in the interval 446–554 (SDSRVKENIQ…KLTNNLEERI (109 aa)). A coiled-coil region spans residues 538–575 (GAVKQLCKLTNNLEERIEELEIWNKKLARLKRLSSSWK). Residues 624-644 (LVVVLIAVMAFCALTIVALYI) form a helical membrane-spanning segment. A disordered region spans residues 656 to 688 (NLPLSNMTSSPEPALSSTAPTSAPHTTPETTQT). Residues 663–688 (TSSPEPALSSTAPTSAPHTTPETTQT) are compositionally biased toward low complexity.

Belongs to the MRF family.

The protein resides in the membrane. This Mus musculus (Mouse) protein is Myelin regulatory factor-like protein (Myrfl).